The following is a 184-amino-acid chain: UPF0316 protein BPUM_0594 (184 aa).

The next 3 membrane-spanning stretches (helical) occupy residues Ala9–Met29, Ala41–Leu61, and Ile67–Ile87.

The protein belongs to the UPF0316 family.

The protein resides in the cell membrane. The polypeptide is UPF0316 protein BPUM_0594 (Bacillus pumilus (strain SAFR-032)).